The sequence spans 508 residues: MMELQLDFFSVTSFIIFFLFLFRLVWDWKNSTDEKLPPGPSKLPIIGSLHHLFGRNVDLPYYALTDLAKIYGPLMHLQLGKMSLVVASSAKMFKELMKENDLAISQRPVPYVARVLEDAGRDIAFVPYGDYWRQIRKISRMELFSVRKVQALHYIREDQSSKLIESIRASAGSVINLSKEVSHYTSTVVARAAFGSGCKDQDKFIRLSLEMVAAAGAVSTLPDMFPLLGFISVISGKKAFLKNIQKEADKILDVIIDEHIQRMKSKGYEEGESDKEDIVDVLLRLERTGELEISITPQDIKAVIWSVFAGGTDTSSTTTLWVMSELMRNPKVMEKVQAEVREMLKGKTEIYESDIQDLTYMRAVMKEALRLRIPGPLLLPREAMEPLEVDGYVIPAKTKILFNAWAVTRDPEIWKDPESFIPDRFIENPIDYKGTNYEFTPFGSGRRICPGMNFGIANVELPLAKLLYFFDWKLPYGMKPDDLDMTAKFGVVCGRKNDLHLIPTPYDP.

A helical membrane pass occupies residues 6–26; it reads LDFFSVTSFIIFFLFLFRLVW. Position 449 (Cys449) interacts with heme.

It belongs to the cytochrome P450 family. It depends on heme as a cofactor. As to expression, mainly expressed in roots and, to a lesser extent, in stems.

The protein localises to the membrane. The catalysed reaction is tirucalla-7,24-dien-3beta-ol + 2 reduced [NADPH--hemoprotein reductase] + 2 O2 = dihydroniloticin + 2 oxidized [NADPH--hemoprotein reductase] + 2 H2O + 2 H(+). The protein operates within secondary metabolite biosynthesis; terpenoid biosynthesis. In terms of biological role, monooxygenase involved in the biosynthesis of quassinoids triterpene natural products such as ailanthone, chaparrinone, glaucarubinone and amarolide, allelopathic degraded triterpene lactones inhibiting the growth of other plants, and possessing antimalarial, antifeedant, insecticidal, anti-inflammatory and anticancer activities. Catalyzes the conversion of tirucalladienol to dihydroniloticin. This is Dihydroniloticin synthase CYP71CD4 from Ailanthus altissima (Tree-of-heaven).